A 341-amino-acid polypeptide reads, in one-letter code: Delta(1)-pyrroline-2-carboxylate reductase (341 aa).

Ser47 functions as the Charge relay system in the catalytic mechanism. His48 (proton donor) is an active-site residue. A substrate-binding site is contributed by Arg52. NADP(+) is bound at residue 120-124; sequence HFSAL. Thr160 is a substrate binding site. An NADP(+)-binding site is contributed by 178-180; that stretch reads DFA. 186-187 lines the substrate pocket; sequence RG. The active-site Charge relay system is the Glu188. NADP(+) is bound by residues 229-230 and 305-311; these read HK and RLPSERR.

Belongs to the LDH2/MDH2 oxidoreductase family. Homodimer.

The catalysed reaction is L-proline + NAD(+) = 1-pyrroline-2-carboxylate + NADH + H(+). It carries out the reaction L-proline + NADP(+) = 1-pyrroline-2-carboxylate + NADPH + H(+). Functionally, catalyzes the reduction of Delta(1)-pyrroline-2-carboxylate (Pyr2C) to L-proline, using NADPH as the electron donor. Is likely involved in a degradation pathway that converts cis- and trans-3-hydroxy-L-proline (c3LHyp and t3LHyp) to L-proline, which would allow S.novella to grow on c3LHyp or t3LHyp as a sole carbon source. This chain is Delta(1)-pyrroline-2-carboxylate reductase, found in Ancylobacter novellus (strain ATCC 8093 / DSM 506 / JCM 20403 / CCM 1077 / IAM 12100 / NBRC 12443 / NCIMB 10456) (Starkeya novella).